The following is a 215-amino-acid chain: Ribosomal RNA small subunit methyltransferase G (215 aa).

The S-adenosyl-L-methionine site is built by glycine 71, leucine 76, and arginine 135.

This sequence belongs to the methyltransferase superfamily. RNA methyltransferase RsmG family.

Its subcellular location is the cytoplasm. In terms of biological role, specifically methylates the N7 position of a guanine in 16S rRNA. This chain is Ribosomal RNA small subunit methyltransferase G, found in Salinibacter ruber (strain DSM 13855 / M31).